The following is a 69-amino-acid chain: MSRLCIFLIQIYRKYISPLKRPSCRFHPTCSAYSMAAYERYGFFKGTYLTLKRILKCHPFHPGGYDPLR.

Belongs to the UPF0161 family.

Its subcellular location is the cell membrane. Its function is as follows. Could be involved in insertion of integral membrane proteins into the membrane. The chain is Putative membrane protein insertion efficiency factor from Alkaliphilus oremlandii (strain OhILAs) (Clostridium oremlandii (strain OhILAs)).